The sequence spans 339 residues: Acyl-CoA dehydrogenase FadE28 (339 aa).

Positions 227, 238, 295, and 299 each coordinate FAD.

Belongs to the acyl-CoA dehydrogenase family. Heterotetramer composed of FadE28 and FadE29. The cofactor is FAD.

It carries out the reaction 3-oxochol-4-en-22-oyl-CoA + A = 3-oxochola-4,17-dien-22-oyl-CoA + AH2. It functions in the pathway steroid metabolism; cholesterol degradation. Involved in the third cycle of side chain dehydrogenation in the beta-oxidation of cholesterol catabolism. May play an important role for the initial macrophage invasion, possibly in response to the acidification of phagosome. It contributes partly to the virulence by increasing the efficiency of beta-oxidation. Catalyzes the dehydrogenation of 2'-propanoyl-CoA ester side chains of 3-oxo-4-pregnene-20-carboxyl-CoA (3-OPC-CoA) to yield 3-oxo-4,17-pregnadiene-20-carboxyl-CoA (3-OPDC-CoA). Also able to dehydrogenate steroyl-CoA such as 3-oxo-chol-4-en-24-oyl-CoA (3-OCO-CoA), 1beta-(2'-propanoyl-CoA)-3a-alpha-H-7a-beta-methylhexahydro-4-indanone (indanone-CoA ester), hexahydroindanone and pregenenone. This Mycobacterium tuberculosis (strain ATCC 25618 / H37Rv) protein is Acyl-CoA dehydrogenase FadE28 (fadE28).